The following is a 261-amino-acid chain: Thiazole synthase (261 aa).

The Schiff-base intermediate with DXP role is filled by Lys97. 1-deoxy-D-xylulose 5-phosphate is bound by residues Gly158, 184–185 (AG), and 206–207 (AS).

It belongs to the ThiG family. Homotetramer. Forms heterodimers with either ThiH or ThiS.

The protein resides in the cytoplasm. The catalysed reaction is [ThiS sulfur-carrier protein]-C-terminal-Gly-aminoethanethioate + 2-iminoacetate + 1-deoxy-D-xylulose 5-phosphate = [ThiS sulfur-carrier protein]-C-terminal Gly-Gly + 2-[(2R,5Z)-2-carboxy-4-methylthiazol-5(2H)-ylidene]ethyl phosphate + 2 H2O + H(+). It functions in the pathway cofactor biosynthesis; thiamine diphosphate biosynthesis. Functionally, catalyzes the rearrangement of 1-deoxy-D-xylulose 5-phosphate (DXP) to produce the thiazole phosphate moiety of thiamine. Sulfur is provided by the thiocarboxylate moiety of the carrier protein ThiS. In vitro, sulfur can be provided by H(2)S. The chain is Thiazole synthase from Corynebacterium diphtheriae (strain ATCC 700971 / NCTC 13129 / Biotype gravis).